A 54-amino-acid chain; its full sequence is uncharacterized protein (54 aa).

Positions 1–38 (MFPNSNGPNKMKALVAPSNSSTTSKTNNNNLPPNGRSS) are disordered. Over residues 17–38 (PSNSSTTSKTNNNNLPPNGRSS) the composition is skewed to low complexity.

This is an uncharacterized protein from Dictyostelium discoideum (Social amoeba).